Reading from the N-terminus, the 306-residue chain is Ornithine carbamoyltransferase (306 aa).

Residues 46-49 (STRT), Gln73, Arg97, and 124-127 (HPTQ) contribute to the carbamoyl phosphate site. L-ornithine is bound by residues Asn156, Asp220, and 224-225 (SM). Residues 260–261 (CL) and Arg288 each bind carbamoyl phosphate.

This sequence belongs to the aspartate/ornithine carbamoyltransferase superfamily. OTCase family.

Its subcellular location is the cytoplasm. The enzyme catalyses carbamoyl phosphate + L-ornithine = L-citrulline + phosphate + H(+). It participates in amino-acid degradation; L-arginine degradation via ADI pathway; carbamoyl phosphate from L-arginine: step 2/2. Functionally, reversibly catalyzes the transfer of the carbamoyl group from carbamoyl phosphate (CP) to the N(epsilon) atom of ornithine (ORN) to produce L-citrulline. The sequence is that of Ornithine carbamoyltransferase from Campylobacter jejuni subsp. jejuni serotype O:6 (strain 81116 / NCTC 11828).